A 375-amino-acid chain; its full sequence is Probable 1-acyl-sn-glycerol-3-phosphate acyltransferase 5 (375 aa).

The next 2 helical transmembrane spans lie at 21–41 (IICLMVLVSTAFMMLIFWGFL) and 57–77 (CVSFFFGSWLALWPFLFEKIN). The HXXXXD motif signature appears at 100 to 105 (HRTEVD). Helical transmembrane passes span 312–332 (YLINCLAVIAFTTICTHLTFF) and 337–357 (WFRIYVSLACVYLTSATHFNL).

The protein belongs to the 1-acyl-sn-glycerol-3-phosphate acyltransferase family. As to expression, widely expressed at low level.

It localises to the membrane. The catalysed reaction is a 1-acyl-sn-glycero-3-phosphate + an acyl-CoA = a 1,2-diacyl-sn-glycero-3-phosphate + CoA. It participates in phospholipid metabolism; CDP-diacylglycerol biosynthesis; CDP-diacylglycerol from sn-glycerol 3-phosphate: step 2/3. In terms of biological role, may convert lysophosphatidic acid (LPA) into phosphatidic acid by incorporating acyl moiety at the 2 position. Has no activity when expressed in bacteria or yeast. This is Probable 1-acyl-sn-glycerol-3-phosphate acyltransferase 5 (LPAT5) from Arabidopsis thaliana (Mouse-ear cress).